The primary structure comprises 384 residues: Dehydrogenase ALT3 (384 aa).

This sequence belongs to the iron-containing alcohol dehydrogenase family. It depends on Fe cation as a cofactor.

It participates in mycotoxin biosynthesis. In terms of biological role, dehydrogenase; part of the gene cluster that mediates the biosynthesis of the host-selective toxins (HSTs) AAL-toxins, sphinganine-analog mycotoxins responsible for Alternaria stem canker on tomato by the tomato pathotype. The biosynthesis starts with the polyketide synthase ALT1-catalyzed C-16 carbon chain assembly from one starter acetyl-CoA unit with malonyl-CoA extender units. ALT1 also selectively transfers methyl groups at the first and the third cycle of chain elongation for AAL toxin. The C-16 polyketide chain is released from the enzyme by a nucleophilic attack of a carbanion, which is derived from R-carbon of glycin by decarboxylation, on the carbonyl carbon of polyketide acyl chain. This step is probably catalyzed by a pyridoxal 5'-phosphate-dependent aminoacyl transferase ALT4. The respective functions of the other enzymes encoded by the cluster have still to be elucidated. The sphingosine N-acyltransferase-like protein ALT7 seems not to act as a resistance/self-tolerance factor against the toxin in the toxin biosynthetic gene cluster, contrary to what is expected. In Alternaria alternata (Alternaria rot fungus), this protein is Dehydrogenase ALT3.